We begin with the raw amino-acid sequence, 283 residues long: 4-diphosphocytidyl-2-C-methyl-D-erythritol kinase (283 aa).

The active site involves Lys-10. Residue 99–109 (PMGGGLGGGSS) coordinates ATP. The active site involves Asp-141.

This sequence belongs to the GHMP kinase family. IspE subfamily. Homodimer.

It catalyses the reaction 4-CDP-2-C-methyl-D-erythritol + ATP = 4-CDP-2-C-methyl-D-erythritol 2-phosphate + ADP + H(+). Its pathway is isoprenoid biosynthesis; isopentenyl diphosphate biosynthesis via DXP pathway; isopentenyl diphosphate from 1-deoxy-D-xylulose 5-phosphate: step 3/6. Functionally, catalyzes the phosphorylation of the position 2 hydroxy group of 4-diphosphocytidyl-2C-methyl-D-erythritol. This is 4-diphosphocytidyl-2-C-methyl-D-erythritol kinase from Shigella dysenteriae serotype 1 (strain Sd197).